The chain runs to 132 residues: Small ribosomal subunit protein uS8 (132 aa).

It belongs to the universal ribosomal protein uS8 family. In terms of assembly, part of the 30S ribosomal subunit. Contacts proteins S5 and S12.

Functionally, one of the primary rRNA binding proteins, it binds directly to 16S rRNA central domain where it helps coordinate assembly of the platform of the 30S subunit. The chain is Small ribosomal subunit protein uS8 from Mycobacterium bovis (strain ATCC BAA-935 / AF2122/97).